We begin with the raw amino-acid sequence, 484 residues long: MLIFELSKTGRQAKAQIPRAVSKNYSIPEEFQRKSRPRLPACSELQVVRHFTCLSQKNFSIDTNFYPLGSCTMKYNPRGVHKAASLPGFINRHPLAMDNESQGFLETLYKLQNYISEITGMPGVSLTPMAGSQGEFAGVAMIKAYHQSRGDTARDEILIPDAAHGTNPASAVMCGFKVVEIATAPDGDIDLDELKRKVGPRTAGIMLTNPSTLGLFMRQIKEIASLVHQAGGLLYYDGANLNAILGKVRPGDMGFDVMHLNLHKTFATPHGGGGPGAGPVAVGKRLIPYMPLPVVKKTDSGYHWATRQDYPQSIGRLSCFMGNAGILLRAYFYMLVLGKEGLLRVSEFATLNANYLLKELTKVGYTAAYPDRRASHEFILTLNSEKKNYDVTAMDFAKRLLDYGVHAPTTYFPLLVPECLLIEPPETESKEELDAFVAVMKTIREEASKQPDILKAAPHTLPVKRLDDVKAARELDLNYFATHE.

The residue at position 264 (K264) is an N6-(pyridoxal phosphate)lysine.

This sequence belongs to the GcvP family. C-terminal subunit subfamily. The glycine cleavage system is composed of four proteins: P, T, L and H. In this organism, the P 'protein' is a heterodimer of two subunits. The cofactor is pyridoxal 5'-phosphate.

It catalyses the reaction N(6)-[(R)-lipoyl]-L-lysyl-[glycine-cleavage complex H protein] + glycine + H(+) = N(6)-[(R)-S(8)-aminomethyldihydrolipoyl]-L-lysyl-[glycine-cleavage complex H protein] + CO2. In terms of biological role, the glycine cleavage system catalyzes the degradation of glycine. The P protein binds the alpha-amino group of glycine through its pyridoxal phosphate cofactor; CO(2) is released and the remaining methylamine moiety is then transferred to the lipoamide cofactor of the H protein. The chain is Probable glycine dehydrogenase (decarboxylating) subunit 2 from Legionella pneumophila (strain Lens).